Reading from the N-terminus, the 802-residue chain is LPS-assembly protein LptD (802 aa).

An N-terminal signal peptide occupies residues 1–25 (MARLFSLKPLVLALGLCFGTHCAAA).

It belongs to the LptD family. As to quaternary structure, component of the lipopolysaccharide transport and assembly complex. Interacts with LptE and LptA.

It is found in the cell outer membrane. Its function is as follows. Together with LptE, is involved in the assembly of lipopolysaccharide (LPS) at the surface of the outer membrane. The protein is LPS-assembly protein LptD of Neisseria meningitidis serogroup B (strain ATCC BAA-335 / MC58).